Here is a 202-residue protein sequence, read N- to C-terminus: MEALLSIFVESVFVKNMALAYFLGMCTFLAISKKIDAAIGLGIAVVVVLTITVPVNNLMFNYLLADGALAWAGLEGVDLSFLGLICYIGVIAAIVQIMEMVLDKYFPALYGALGVFLPLITVNCAILGAALLMVQREYTFSESVVFGVGSGVGWAFAIVALAGIREKLKYSDVPEGLRGLGITFITVGLMSLGFMSFGGIAL.

6 consecutive transmembrane segments (helical) span residues 11–31, 35–55, 81–101, 114–134, 144–164, and 182–202; these read SVFVKNMALAYFLGMCTFLAI, IDAAIGLGIAVVVVLTITVPV, FLGLICYIGVIAAIVQIMEMV, GVFLPLITVNCAILGAALLMV, VVFGVGSGVGWAFAIVALAGI, and ITFITVGLMSLGFMSFGGIAL.

The protein belongs to the NqrDE/RnfAE family. In terms of assembly, composed of six subunits; NqrA, NqrB, NqrC, NqrD, NqrE and NqrF.

It localises to the cell inner membrane. It carries out the reaction a ubiquinone + n Na(+)(in) + NADH + H(+) = a ubiquinol + n Na(+)(out) + NAD(+). Functionally, NQR complex catalyzes the reduction of ubiquinone-1 to ubiquinol by two successive reactions, coupled with the transport of Na(+) ions from the cytoplasm to the periplasm. NqrA to NqrE are probably involved in the second step, the conversion of ubisemiquinone to ubiquinol. This is Na(+)-translocating NADH-quinone reductase subunit E from Saccharophagus degradans (strain 2-40 / ATCC 43961 / DSM 17024).